The sequence spans 199 residues: Transcription factor 15 (199 aa).

The tract at residues 25-67 is disordered; it reads EENRSESDASDQSFGCCEGPEAARRGPGPGGGRRAGGGGGAGP. Positions 51–66 are enriched in gly residues; the sequence is PGPGGGRRAGGGGGAG. Residues 72–124 enclose the bHLH domain; the sequence is RQRQAANARERDRTQSVNTAFTALRTLIPTEPVDRKLSKIETVRLASSYIAHL.

As to quaternary structure, heterodimer; efficient DNA binding requires dimerization with another bHLH protein, such as TCF3/E12. Interacts with MEOX2.

The protein resides in the nucleus. Its function is as follows. Early transcription factor that plays a key role in somitogenesis, paraxial mesoderm development and regulation of stem cell pluripotency. Essential for the mesenchymal to epithelial transition associated with somite formation. Required for somite morphogenesis, thereby regulating patterning of the axial skeleton and skeletal muscles. Required for proper localization of somite epithelium markers during the mesenchymal to epithelial transition. Also plays a key role in regulation of stem cell pluripotency. Promotes pluripotency exit of embryonic stem cells (ESCs) by priming ESCs for differentiation. Acts as a key regulator of self-renewal of hematopoietic stem cells (HSCs) by mediating HSCs quiescence and long-term self-renewal. Together with MEOX2, regulates transcription in heart endothelial cells to regulate fatty acid transport across heart endothelial cells. Acts by forming a heterodimer with another helix-loop-helix (bHLH) protein, such as TCF3/E12, that binds DNA on E-box motifs (5'-CANNTG-3') and activates transcription of target genes. The protein is Transcription factor 15 of Homo sapiens (Human).